The primary structure comprises 532 residues: FRIGIDA-like protein 4a (532 aa).

A disordered region spans residues 406–432; that stretch reads KTEKRKPAAVPANKRTRASYNGPMPPA.

This sequence belongs to the Frigida family. In terms of tissue distribution, expressed in leaves, shoot apex, flowers and during seed development.

The chain is FRIGIDA-like protein 4a (FRL4A) from Arabidopsis thaliana (Mouse-ear cress).